The primary structure comprises 478 residues: NADH oxidase (478 aa).

FAD is bound by residues 8 to 12 (GINHA), Asp33, Cys43, Val80, 111 to 114 (ASGA), Lys149, and Tyr177. The active-site Proton acceptor is His11. Cys43 acts as the Redox-active in catalysis. Cysteine sulfinic acid (-SO2H) is present on Cys43. NAD(+) is bound by residues 170 to 185 (VAIV…LAEA), Asp197, and Gly264. Residues 295 to 305 (LNHKDVYVIGG), Leu322, Ala323, and Thr324 each bind FAD. Position 353 (Ala353) interacts with NAD(+). Phe450 is a binding site for FAD.

Belongs to the class-III pyridine nucleotide-disulfide oxidoreductase family. It depends on FAD as a cofactor.

The catalysed reaction is 2 NADH + O2 + 2 H(+) = 2 NAD(+) + 2 H2O. Catalyzes the four-electron reduction of molecular oxygen to water. In Mycoplasma genitalium (strain ATCC 33530 / DSM 19775 / NCTC 10195 / G37) (Mycoplasmoides genitalium), this protein is NADH oxidase (nox).